A 192-amino-acid polypeptide reads, in one-letter code: dTTP/UTP pyrophosphatase (192 aa).

The active-site Proton acceptor is the Asp-72.

The protein belongs to the Maf family. YhdE subfamily. Requires a divalent metal cation as cofactor.

Its subcellular location is the cytoplasm. The enzyme catalyses dTTP + H2O = dTMP + diphosphate + H(+). It carries out the reaction UTP + H2O = UMP + diphosphate + H(+). In terms of biological role, nucleoside triphosphate pyrophosphatase that hydrolyzes dTTP and UTP. May have a dual role in cell division arrest and in preventing the incorporation of modified nucleotides into cellular nucleic acids. This chain is dTTP/UTP pyrophosphatase, found in Hydrogenovibrio crunogenus (strain DSM 25203 / XCL-2) (Thiomicrospira crunogena).